Reading from the N-terminus, the 428-residue chain is tRNA modification GTPase MnmE (428 aa).

Residues R20, E77, and K117 each coordinate (6S)-5-formyl-5,6,7,8-tetrahydrofolate. One can recognise a TrmE-type G domain in the interval 213–351 (GFEIALVGAP…LLEKIRSVFS (139 aa)). N223 serves as a coordination point for K(+). GTP contacts are provided by residues 223–228 (NAGKST), 242–248 (SEIAGTT), and 267–270 (DTAG). Residue S227 coordinates Mg(2+). 3 residues coordinate K(+): S242, I244, and T247. T248 contributes to the Mg(2+) binding site. A (6S)-5-formyl-5,6,7,8-tetrahydrofolate-binding site is contributed by K428.

The protein belongs to the TRAFAC class TrmE-Era-EngA-EngB-Septin-like GTPase superfamily. TrmE GTPase family. In terms of assembly, homodimer. Heterotetramer of two MnmE and two MnmG subunits. K(+) serves as cofactor.

Its subcellular location is the cytoplasm. In terms of biological role, exhibits a very high intrinsic GTPase hydrolysis rate. Involved in the addition of a carboxymethylaminomethyl (cmnm) group at the wobble position (U34) of certain tRNAs, forming tRNA-cmnm(5)s(2)U34. This Roseobacter denitrificans (strain ATCC 33942 / OCh 114) (Erythrobacter sp. (strain OCh 114)) protein is tRNA modification GTPase MnmE.